The following is a 72-amino-acid chain: Large ribosomal subunit protein bL28 (72 aa).

Belongs to the bacterial ribosomal protein bL28 family.

This chain is Large ribosomal subunit protein bL28, found in Chlorobaculum parvum (strain DSM 263 / NCIMB 8327) (Chlorobium vibrioforme subsp. thiosulfatophilum).